We begin with the raw amino-acid sequence, 132 residues long: Small ribosomal subunit protein uS11 (132 aa).

The tract at residues 110-132 (IEDVTPVPSDSTRRKGGRRGRRL) is disordered. Residues 123 to 132 (RKGGRRGRRL) are compositionally biased toward basic residues.

It belongs to the universal ribosomal protein uS11 family. As to quaternary structure, component of the small ribosomal subunit. Mature ribosomes consist of a small (40S) and a large (60S) subunit. The 40S subunit contains about 32 different proteins and 1 molecule of RNA (18S). The 60S subunit contains 45 different proteins and 3 molecules of RNA (25S, 5.8S and 5S).

The protein localises to the cytoplasm. In terms of biological role, component of the ribosome, a large ribonucleoprotein complex responsible for the synthesis of proteins in the cell. The small ribosomal subunit (SSU) binds messenger RNAs (mRNAs) and translates the encoded message by selecting cognate aminoacyl-transfer RNA (tRNA) molecules. The large subunit (LSU) contains the ribosomal catalytic site termed the peptidyl transferase center (PTC), which catalyzes the formation of peptide bonds, thereby polymerizing the amino acids delivered by tRNAs into a polypeptide chain. The nascent polypeptides leave the ribosome through a tunnel in the LSU and interact with protein factors that function in enzymatic processing, targeting, and the membrane insertion of nascent chains at the exit of the ribosomal tunnel. RPS14B is involved in nucleolar processing of pre-18S ribosomal RNA and ribosome assembly. The chain is Small ribosomal subunit protein uS11 (RPS14B) from Candida albicans (strain SC5314 / ATCC MYA-2876) (Yeast).